The sequence spans 217 residues: Probable transaldolase (217 aa).

Residue Lys-83 is the Schiff-base intermediate with substrate of the active site.

This sequence belongs to the transaldolase family. Type 3B subfamily.

It is found in the cytoplasm. The catalysed reaction is D-sedoheptulose 7-phosphate + D-glyceraldehyde 3-phosphate = D-erythrose 4-phosphate + beta-D-fructose 6-phosphate. It participates in carbohydrate degradation; pentose phosphate pathway; D-glyceraldehyde 3-phosphate and beta-D-fructose 6-phosphate from D-ribose 5-phosphate and D-xylulose 5-phosphate (non-oxidative stage): step 2/3. Functionally, transaldolase is important for the balance of metabolites in the pentose-phosphate pathway. The chain is Probable transaldolase from Pseudothermotoga lettingae (strain ATCC BAA-301 / DSM 14385 / NBRC 107922 / TMO) (Thermotoga lettingae).